A 348-amino-acid polypeptide reads, in one-letter code: Endoplasmic reticulum junction formation protein lunapark-A (348 aa).

The Cytoplasmic portion of the chain corresponds to 1–43; sequence MSVFCLQAKPTTVEILEGIDKDIQILEDYSVKYQRQMKAVVGR. A helical membrane pass occupies residues 44–64; it reads LLLYSILLYLMAGVVVYSWYL. Topologically, residues 65 to 67 are lumenal; it reads PEQ. Residues 68 to 88 form a helical membrane-spanning segment; sequence LMGRLVLGLPFLLFPLLVWIL. Residues 89 to 348 lie on the Cytoplasmic side of the membrane; it reads RKVLILFFAR…EEDKQSDSGD (260 aa). A coiled-coil region spans residues 105 to 126; the sequence is FKLEDLKAQKRKILEDVMETET. Residues 142–211 form a disordered region; sequence KKKTDFDSTP…HSAPGGPPER (70 aa). The C4-type; plays a role in ER morphology zinc-finger motif lies at 277–302; that stretch reads CQQCLSHNGMALKEEFEYVAFRCAYC. The disordered stretch occupies residues 313-348; the sequence is PQAPRLPETAGEPKLPCDLNSSSCAAEEDKQSDSGD. Positions 339 to 348 are enriched in basic and acidic residues; the sequence is EEDKQSDSGD.

The protein belongs to the lunapark family. As to quaternary structure, homodimer; homodimerization requires the C4-type zinc finger motif and decreases during mitosis in a phosphorylation-dependent manner. Phosphorylated. Phosphorylation occurs during interphase. Phosphorylation also occurs during mitosis; these phosphorylations reduce both its homodimerization and the ER three-way tubular junction formation.

Its subcellular location is the endoplasmic reticulum membrane. Endoplasmic reticulum (ER)-shaping membrane protein that plays a role in determining ER morphology. Involved in the stabilization of nascent three-way ER tubular junctions within the ER network. May also play a role as a curvature-stabilizing protein within three-way ER tubular junction network. This is Endoplasmic reticulum junction formation protein lunapark-A (lnpka) from Takifugu rubripes (Japanese pufferfish).